A 193-amino-acid chain; its full sequence is AP-3 complex subunit sigma-2 (193 aa).

It belongs to the adaptor complexes small subunit family. In terms of assembly, adaptor protein complex 3 (AP-3) is a heterotetramer composed of two large adaptins (delta-type subunit AP3D1 and beta-type subunit AP3B1 or AP3B2), a medium adaptin (mu-type subunit AP3M1 or AP3M2) and a small adaptin (sigma-type subunit APS1 or AP3S2). Interacts with AGAP1. AP-3 associates with the BLOC-1 complex.

The protein localises to the golgi apparatus. It is found in the cytoplasmic vesicle membrane. Functionally, part of the AP-3 complex, an adaptor-related complex which is not clathrin-associated. The complex is associated with the Golgi region as well as more peripheral structures. It facilitates the budding of vesicles from the Golgi membrane and may be directly involved in trafficking to lysosomes. In concert with the BLOC-1 complex, AP-3 is required to target cargos into vesicles assembled at cell bodies for delivery into neurites and nerve terminals. This chain is AP-3 complex subunit sigma-2 (AP3S2), found in Bos taurus (Bovine).